Here is a 390-residue protein sequence, read N- to C-terminus: Na(+)/H(+) antiporter NhaA (390 aa).

The next 12 helical transmembrane spans lie at 14-34 (AAGGIVLIAAAALAMLLANLN), 61-81 (MLLWVNDALMAVFFLLVGLEV), 97-117 (SLPVIAALGGMVLPAALYLAF), 126-146 (AGWAIPAATDIAFALGILALL), 156-176 (VFLMALAIIDDLGAIVIIALF), 181-201 (LSMVSLMVAAGAIAVLAVLNL), 221-241 (VLKSGVHATLAGVIIGFFVPL), 256-276 (ALHPWVGFLILPLFAFANAGV), 280-300 (GVTLAGLASLLPLGIIAGLFI), 305-325 (GISLFCALAVKLKWATLPPGV), 330-350 (ILAVGVLCGIGFTMSIFIASL), and 362-382 (WAKLGILVGSLLAAVIGYALL).

It belongs to the NhaA Na(+)/H(+) (TC 2.A.33) antiporter family.

The protein localises to the cell inner membrane. The catalysed reaction is Na(+)(in) + 2 H(+)(out) = Na(+)(out) + 2 H(+)(in). Na(+)/H(+) antiporter that extrudes sodium in exchange for external protons. The sequence is that of Na(+)/H(+) antiporter NhaA from Cronobacter sakazakii (strain ATCC BAA-894) (Enterobacter sakazakii).